The chain runs to 161 residues: V-type proton ATPase subunit c (161 aa).

Over methionine 1–tyrosine 9 the chain is Lumenal. Residues alanine 10–glycine 32 form a helical membrane-spanning segment. The Cytoplasmic segment spans residues threonine 33–asparagine 54. A helical membrane pass occupies residues threonine 55 to isoleucine 75. Residues serine 76–glutamine 91 lie on the Lumenal side of the membrane. The helical transmembrane segment at leucine 92–glycine 113 threads the bilayer. At aspartate 114–arginine 125 the chain is on the cytoplasmic side. Residues leucine 126–leucine 151 form a helical membrane-spanning segment. Over asparagine 152–cysteine 161 the chain is Lumenal.

Belongs to the V-ATPase proteolipid subunit family. V-ATPase is a heteromultimeric enzyme composed of a peripheral catalytic V1 complex (components A to H) attached to an integral membrane V0 proton pore complex (components: a, c, c', c'', d, e, f and VOA1). The decameric c-ring forms the proton-conducting pore, and is composed of eight proteolipid subunits c, one subunit c' and one subunit c''.

The protein resides in the vacuole membrane. Functionally, proton-conducting pore forming subunit of the V0 complex of vacuolar(H+)-ATPase (V-ATPase), a multisubunit enzyme composed of a peripheral complex (V1) that hydrolyzes ATP and a membrane integral complex (V0) that translocates protons. V-ATPase is responsible for acidifying and maintaining the pH of intracellular compartments. This chain is V-type proton ATPase subunit c, found in Schizosaccharomyces pombe (strain 972 / ATCC 24843) (Fission yeast).